We begin with the raw amino-acid sequence, 192 residues long: Nucleotidase CA_C3379 (192 aa).

The protein belongs to the 5'(3')-deoxyribonucleotidase family. It depends on Mg(2+) as a cofactor.

It carries out the reaction sugar phosphate + H2O = sugar + phosphate.. In terms of biological role, catalyzes the dephosphorylation of nucleotide monophosphates and of different sugar phosphates in vitro. The protein is Nucleotidase CA_C3379 of Clostridium acetobutylicum (strain ATCC 824 / DSM 792 / JCM 1419 / IAM 19013 / LMG 5710 / NBRC 13948 / NRRL B-527 / VKM B-1787 / 2291 / W).